The sequence spans 2189 residues: Chromatin modification-related protein eaf-1 (2189 aa).

3 disordered regions span residues 183 to 400 (VQGS…SGAE), 415 to 438 (VIGK…TQHP), and 477 to 601 (EVAK…PPGL). Residues 234–253 (PTPQTVAPPATAPTSTTKTA) are compositionally biased toward low complexity. The span at 260–277 (AGPKDDTVSRGDAEEKAR) shows a compositional bias: basic and acidic residues. 3 stretches are compositionally biased toward polar residues: residues 281-293 (TITS…SNGD), 300-312 (TLSS…QSAP), and 319-333 (ASAS…SQSF). The segment covering 336 to 349 (PVSRPEQELRRATT) has biased composition (basic and acidic residues). Residues 534-543 (QPQPSSTAPS) are compositionally biased toward low complexity. The segment covering 573 to 583 (ETQARTSQSSH) has biased composition (polar residues). One can recognise an HSA domain in the interval 722 to 797 (PVRCLEPARP…PPVRAVDNAD (76 aa)). Positions 985 to 1045 (FESRIASQWT…ECFERWVNLE (61 aa)) constitute a Myb-like domain. 2 stretches are compositionally biased toward low complexity: residues 1320–1330 (VAVQLQQQQHQ) and 1336–1406 (QHPQ…QVTQ). Disordered regions lie at residues 1320 to 1428 (VAVQ…PMRP), 1622 to 1644 (MQTQ…QAQA), 1663 to 1831 (QKQA…GQVQ), and 1846 to 2189 (VQGQ…APTK). Composition is skewed to low complexity over residues 1663–1808 (QKQA…QGQG), 1818–1831 (GQGH…GQVQ), 1846–1863 (VQGQ…PQHA), 1873–2089 (QHAQ…QPQQ), and 2097–2189 (SQPQ…APTK).

It belongs to the EAF1 family. Component of the NuA4 histone acetyltransferase complex.

It localises to the nucleus. Its function is as follows. Component of the NuA4 histone acetyltransferase complex which is involved in transcriptional activation of selected genes principally by acetylation of nucleosomal histone H4 and H2A. The NuA4 complex is also involved in DNA repair. The chain is Chromatin modification-related protein eaf-1 (eaf-1) from Neurospora crassa (strain ATCC 24698 / 74-OR23-1A / CBS 708.71 / DSM 1257 / FGSC 987).